We begin with the raw amino-acid sequence, 488 residues long: GTPase Der (488 aa).

An EngA-type G 1 domain is found at 3–166 (PVVALVGRPN…YALAPYAEAL (164 aa)). Residues 9 to 16 (GRPNVGKS), 56 to 60 (DTGGI), and 118 to 121 (NKVD) each bind GTP. A disordered region spans residues 168–191 (LNRDGDEDEDEEEREYSEEEAEAE). Residues 172–189 (GDEDEDEEEREYSEEEAE) are compositionally biased toward acidic residues. Residues 200–373 (IKMAIIGKPN…SVQEAYDSAT (174 aa)) form the EngA-type G 2 domain. GTP is bound by residues 206–213 (GKPNVGKS), 253–257 (DTAGV), and 318–321 (NKWD). The KH-like domain occupies 374 to 458 (RRVSTSMLTR…PIQIRFQDSA (85 aa)).

Belongs to the TRAFAC class TrmE-Era-EngA-EngB-Septin-like GTPase superfamily. EngA (Der) GTPase family. Associates with the 50S ribosomal subunit.

In terms of biological role, GTPase that plays an essential role in the late steps of ribosome biogenesis. In Shewanella sediminis (strain HAW-EB3), this protein is GTPase Der.